Consider the following 126-residue polypeptide: Histone H2B type 1-H (126 aa).

The segment covering 1-12 (MPDPAKSAPAPK) has biased composition (low complexity). The interval 1–36 (MPDPAKSAPAPKKGSKKAVTKAQKKDGKKRKRSRKE) is disordered. The residue at position 2 (Pro-2) is an N-acetylproline. Lys-6 carries the N6-(2-hydroxyisobutyryl)lysine; alternate modification. Lys-6 bears the N6-(beta-hydroxybutyryl)lysine; alternate mark. Lys-6 bears the N6-acetyllysine; alternate mark. At Lys-6 the chain carries N6-butyryllysine; alternate. Position 6 is an N6-crotonyllysine; alternate (Lys-6). Lys-6 is subject to N6-lactoyllysine; alternate. A Glycyl lysine isopeptide (Lys-Gly) (interchain with G-Cter in SUMO2); alternate cross-link involves residue Lys-6. At Ser-7 the chain carries ADP-ribosylserine. Lys-12 bears the N6-(beta-hydroxybutyryl)lysine; alternate mark. Residues Lys-12 and Lys-13 each carry the N6-acetyllysine; alternate modification. An N6-crotonyllysine; alternate mark is found at Lys-12 and Lys-13. N6-lactoyllysine; alternate is present on Lys-12. N6-(2-hydroxyisobutyryl)lysine; alternate is present on Lys-13. Phosphoserine; by STK4/MST1 is present on Ser-15. An N6-acetyllysine; alternate mark is found at Lys-16, Lys-17, Lys-21, and Lys-24. Lys-16, Lys-17, Lys-21, and Lys-24 each carry N6-crotonyllysine; alternate. Lys-16, Lys-17, Lys-21, and Lys-24 each carry N6-lactoyllysine; alternate. N6-(beta-hydroxybutyryl)lysine; alternate occurs at positions 17 and 21. Lys-17 is modified (N6-glutaryllysine; alternate). N6-(2-hydroxyisobutyryl)lysine; alternate is present on residues Lys-21 and Lys-24. An N6-butyryllysine; alternate modification is found at Lys-21. Lys-21 is covalently cross-linked (Glycyl lysine isopeptide (Lys-Gly) (interchain with G-Cter in SUMO2); alternate). Lys-25 carries the post-translational modification N6-(2-hydroxyisobutyryl)lysine. Lys-35 bears the N6-(2-hydroxyisobutyryl)lysine; alternate mark. Residue Lys-35 is modified to N6-(beta-hydroxybutyryl)lysine; alternate. Lys-35 carries the post-translational modification N6-crotonyllysine; alternate. N6-glutaryllysine; alternate is present on Lys-35. Position 35 is an N6-succinyllysine; alternate (Lys-35). Lys-35 participates in a covalent cross-link: Glycyl lysine isopeptide (Lys-Gly) (interchain with G-Cter in ubiquitin); alternate. Glu-36 is subject to PolyADP-ribosyl glutamic acid. A Phosphoserine; by AMPK modification is found at Ser-37. Lys-44, Lys-47, and Lys-58 each carry N6-(2-hydroxyisobutyryl)lysine; alternate. Lys-44 carries the post-translational modification N6-lactoyllysine; alternate. N6-glutaryllysine; alternate occurs at positions 44 and 47. Lys-47 carries the post-translational modification N6-methyllysine; alternate. N6,N6-dimethyllysine; alternate is present on Lys-58. Arg-80 bears the Dimethylated arginine mark. Lys-86 carries the N6-(2-hydroxyisobutyryl)lysine; alternate modification. Lys-86 bears the N6-(beta-hydroxybutyryl)lysine; alternate mark. At Lys-86 the chain carries N6-acetyllysine; alternate. The residue at position 86 (Lys-86) is an N6-lactoyllysine; alternate. Position 86 is an N6,N6,N6-trimethyllysine; alternate (Lys-86). Arg-87 and Arg-93 each carry omega-N-methylarginine. Lys-109 carries the post-translational modification N6-(2-hydroxyisobutyryl)lysine; alternate. N6-lactoyllysine; alternate is present on Lys-109. An N6-glutaryllysine; alternate modification is found at Lys-109. Lys-109 carries the N6-methyllysine; alternate modification. O-linked (GlcNAc) serine glycosylation occurs at Ser-113. At Thr-116 the chain carries Phosphothreonine. Lys-117 and Lys-121 each carry N6-(2-hydroxyisobutyryl)lysine; alternate. N6-(beta-hydroxybutyryl)lysine; alternate occurs at positions 117 and 121. An N6-lactoyllysine; alternate mark is found at Lys-117 and Lys-121. N6-glutaryllysine; alternate is present on residues Lys-117 and Lys-121. 2 positions are modified to N6-succinyllysine; alternate: Lys-117 and Lys-121. Lys-117 bears the N6-malonyllysine; alternate mark. At Lys-117 the chain carries N6-methylated lysine; alternate. A Glycyl lysine isopeptide (Lys-Gly) (interchain with G-Cter in ubiquitin); alternate cross-link involves residue Lys-121.

The protein belongs to the histone H2B family. The nucleosome is a histone octamer containing two molecules each of H2A, H2B, H3 and H4 assembled in one H3-H4 heterotetramer and two H2A-H2B heterodimers. The octamer wraps approximately 147 bp of DNA. Found in a complex with PPAR9; DTX3L AND STAT1; the interaction is likely to induce DTX3L-mediated ubiquitination of H2BC9/H2BJ. In terms of processing, monoubiquitination at Lys-35 (H2BK34Ub) by the MSL1/MSL2 dimer is required for histone H3 'Lys-4' (H3K4me) and 'Lys-79' (H3K79me) methylation and transcription activation at specific gene loci, such as HOXA9 and MEIS1 loci. Similarly, monoubiquitination at Lys-121 (H2BK120Ub) by the RNF20/40 complex gives a specific tag for epigenetic transcriptional activation and is also prerequisite for histone H3 'Lys-4' and 'Lys-79' methylation. It also functions cooperatively with the FACT dimer to stimulate elongation by RNA polymerase II. H2BK120Ub also acts as a regulator of mRNA splicing: deubiquitination by USP49 is required for efficient cotranscriptional splicing of a large set of exons. Monoubiquitinated by DTX3L upon encephalomyocarditis virus (EMCV)-mediated infection. Post-translationally, phosphorylation at Ser-37 (H2BS36ph) by AMPK in response to stress promotes transcription. Phosphorylated on Ser-15 (H2BS14ph) by STK4/MST1 during apoptosis; which facilitates apoptotic chromatin condensation. Also phosphorylated on Ser-15 in response to DNA double strand breaks (DSBs), and in correlation with somatic hypermutation and immunoglobulin class-switch recombination. GlcNAcylation at Ser-113 promotes monoubiquitination of Lys-121. It fluctuates in response to extracellular glucose, and associates with transcribed genes. In terms of processing, ADP-ribosylated by PARP1 or PARP2 on Ser-7 (H2BS6ADPr) in response to DNA damage. H2BS6ADPr promotes recruitment of CHD1L. Poly ADP-ribosylation on Glu-36 (H2BE35ADPr) by PARP1 regulates adipogenesis: it inhibits phosphorylation at Ser-37 (H2BS36ph), thereby blocking expression of pro-adipogenetic genes. Post-translationally, crotonylation (Kcr) is specifically present in male germ cells and marks testis-specific genes in post-meiotic cells, including X-linked genes that escape sex chromosome inactivation in haploid cells. Crotonylation marks active promoters and enhancers and confers resistance to transcriptional repressors. It is also associated with post-meiotically activated genes on autosomes. Lactylated in macrophages by EP300/P300 by using lactoyl-CoA directly derived from endogenous or exogenous lactate, leading to stimulates gene transcription.

It localises to the nucleus. It is found in the chromosome. Functionally, core component of nucleosome. Nucleosomes wrap and compact DNA into chromatin, limiting DNA accessibility to the cellular machineries which require DNA as a template. Histones thereby play a central role in transcription regulation, DNA repair, DNA replication and chromosomal stability. DNA accessibility is regulated via a complex set of post-translational modifications of histones, also called histone code, and nucleosome remodeling. The polypeptide is Histone H2B type 1-H (Homo sapiens (Human)).